A 184-amino-acid chain; its full sequence is Interferon alpha-1 (184 aa).

The first 23 residues, 1-23, serve as a signal peptide directing secretion; that stretch reads MALPVSLLMALVVLSCHSICSLG. Cystine bridges form between cysteine 24–cysteine 122 and cysteine 52–cysteine 162.

Belongs to the alpha/beta interferon family. Interacts with CR2.

It localises to the secreted. In terms of biological role, produced by macrophages, IFN-alpha have antiviral activities. Interferon stimulates the production of two enzymes: a protein kinase and an oligoadenylate synthetase. The polypeptide is Interferon alpha-1 (Equus caballus (Horse)).